We begin with the raw amino-acid sequence, 716 residues long: Dynein axonemal intermediate chain 7 (716 aa).

Belongs to the DNAI7 family. Part of the multisubunit axonemal dynein complex formed at least of two heavy chains and a number of intermediate and light chains. Interacts with tubulin. Associates with microtubule. In terms of processing, ubiquitinated. Ubiquitination leads to its degradation through the 26S proteasome. Ubiquitin-proteasome-mediated DNAI7 degradation occurs in mitosis.

The protein localises to the cell projection. It is found in the cilium. It localises to the cytoplasm. In terms of biological role, via its association with the multisubunit axonemal dynein complex, is potentially involved in the regulation of cilia function. May also act as a cell cycle regulator. This chain is Dynein axonemal intermediate chain 7, found in Homo sapiens (Human).